A 456-amino-acid chain; its full sequence is GTPase Der (456 aa).

2 EngA-type G domains span residues 4-169 and 178-353; these read PVVA…PSKD and VQLA…DQSR. GTP contacts are provided by residues 10-17, 57-61, 120-123, 184-191, 231-235, and 296-299; these read GRPNVGKS, DTGGL, NKCE, DTAGI, and NKWD. One can recognise a KH-like domain in the interval 354–439; that stretch reads RRVTTSVVNE…PIKLFWRGKQ (86 aa).

This sequence belongs to the TRAFAC class TrmE-Era-EngA-EngB-Septin-like GTPase superfamily. EngA (Der) GTPase family. Associates with the 50S ribosomal subunit.

GTPase that plays an essential role in the late steps of ribosome biogenesis. This is GTPase Der from Prochlorococcus marinus (strain NATL2A).